The following is a 355-amino-acid chain: 3-dehydroquinate synthase (355 aa).

Residues 71-76, 105-109, 129-130, Lys-142, and Lys-151 each bind NAD(+); these read EGEERK, GVVGD, and TS. The Zn(2+) site is built by Glu-184, His-246, and His-263.

This sequence belongs to the sugar phosphate cyclases superfamily. Dehydroquinate synthase family. The cofactor is NAD(+). Requires Co(2+) as cofactor. It depends on Zn(2+) as a cofactor.

It is found in the cytoplasm. It catalyses the reaction 7-phospho-2-dehydro-3-deoxy-D-arabino-heptonate = 3-dehydroquinate + phosphate. It functions in the pathway metabolic intermediate biosynthesis; chorismate biosynthesis; chorismate from D-erythrose 4-phosphate and phosphoenolpyruvate: step 2/7. In terms of biological role, catalyzes the conversion of 3-deoxy-D-arabino-heptulosonate 7-phosphate (DAHP) to dehydroquinate (DHQ). The polypeptide is 3-dehydroquinate synthase (Streptococcus pneumoniae (strain ATCC BAA-255 / R6)).